We begin with the raw amino-acid sequence, 287 residues long: Bifunctional protein FolD (287 aa).

Residues 165-167, Ser190, and Ile231 contribute to the NADP(+) site; that span reads GRS.

The protein belongs to the tetrahydrofolate dehydrogenase/cyclohydrolase family. In terms of assembly, homodimer.

It carries out the reaction (6R)-5,10-methylene-5,6,7,8-tetrahydrofolate + NADP(+) = (6R)-5,10-methenyltetrahydrofolate + NADPH. The enzyme catalyses (6R)-5,10-methenyltetrahydrofolate + H2O = (6R)-10-formyltetrahydrofolate + H(+). It participates in one-carbon metabolism; tetrahydrofolate interconversion. Catalyzes the oxidation of 5,10-methylenetetrahydrofolate to 5,10-methenyltetrahydrofolate and then the hydrolysis of 5,10-methenyltetrahydrofolate to 10-formyltetrahydrofolate. This Carboxydothermus hydrogenoformans (strain ATCC BAA-161 / DSM 6008 / Z-2901) protein is Bifunctional protein FolD.